The following is a 150-amino-acid chain: L-alanine exporter AlaE (150 aa).

The next 4 helical transmembrane spans lie at 17 to 37 (FAMV…ISGM), 48 to 68 (LSIP…DFML), 86 to 106 (LVAY…VVGA), and 111 to 131 (IITA…FYGY).

It belongs to the AlaE exporter family.

It is found in the cell inner membrane. Its function is as follows. Exports L-alanine. This chain is L-alanine exporter AlaE, found in Aliivibrio fischeri (strain ATCC 700601 / ES114) (Vibrio fischeri).